A 359-amino-acid polypeptide reads, in one-letter code: Biotin synthase (359 aa).

A disordered region spans residues 1–22; it reads MQSTPLNFVPNAAKAPVTPGQA. The Radical SAM core domain maps to 58–285; it reads NAVQLSTLLS…KAMVRLSAGR (228 aa). The [4Fe-4S] cluster site is built by C73, C77, and C80. [2Fe-2S] cluster-binding residues include C117, C148, C208, and R280.

This sequence belongs to the radical SAM superfamily. Biotin synthase family. As to quaternary structure, homodimer. The cofactor is [4Fe-4S] cluster. [2Fe-2S] cluster is required as a cofactor.

The enzyme catalyses (4R,5S)-dethiobiotin + (sulfur carrier)-SH + 2 reduced [2Fe-2S]-[ferredoxin] + 2 S-adenosyl-L-methionine = (sulfur carrier)-H + biotin + 2 5'-deoxyadenosine + 2 L-methionine + 2 oxidized [2Fe-2S]-[ferredoxin]. It participates in cofactor biosynthesis; biotin biosynthesis; biotin from 7,8-diaminononanoate: step 2/2. Catalyzes the conversion of dethiobiotin (DTB) to biotin by the insertion of a sulfur atom into dethiobiotin via a radical-based mechanism. The protein is Biotin synthase of Ralstonia pickettii (strain 12J).